Reading from the N-terminus, the 714-residue chain is GATA zinc finger domain-containing protein 10 (714 aa).

Disordered stretches follow at residues 28-97 (YIQQ…NKQI), 115-180 (TMPH…QQQQ), 266-362 (MPMN…QQQQ), 394-419 (QQQQQQPQYHNGMPHHMQQHSPESMD), 454-476 (MHLQQQQQNQQNQQIQQQHQQIQ), and 528-621 (IQQQ…RRRT). 2 stretches are compositionally biased toward low complexity: residues 30–94 (QQQQ…NNNN) and 130–147 (QQQQQQQQQHYQQQQHPH). Over residues 148–168 (QQQHPHQQQHPHQQQHPHQQQ) the composition is skewed to basic residues. The segment covering 169-180 (HPHQQQIQQQQQ) has biased composition (low complexity). A compositionally biased stretch (polar residues) spans 271–282 (GGNSRKNSFDMY). 2 stretches are compositionally biased toward low complexity: residues 283-322 (NNNNNNNNNNNINNNNNNNNNNNINNNNNNNNNNNNNNNI) and 340-362 (QHQQQHQQQQHQQQHQQQHQQQQ). Composition is skewed to low complexity over residues 457 to 476 (QQQQQNQQNQQIQQQHQQIQ) and 528 to 549 (IQQQQQSIAKQQMPQQQNTPNN). Over residues 550–569 (GSPSSSDGKSPVNSNTAITS) the composition is skewed to polar residues. The segment covering 570-588 (NNNNNNNNNNNNNNNNNNN) has biased composition (low complexity). The segment at 631 to 656 (CHYCEVTETPEWRRGPDGDHTLCNAC) adopts a GATA-type zinc-finger fold. Positions 661-694 (AKSQKKLAREKELEKQKELEREKERENTRKHSID) form a coiled coil. The span at 667–693 (LAREKELEKQKELEREKERENTRKHSI) shows a compositional bias: basic and acidic residues. The interval 667–714 (LAREKELEKQKELEREKERENTRKHSIDFMLMNDTSSAPTNSQNPTPN) is disordered. Over residues 699 to 714 (NDTSSAPTNSQNPTPN) the composition is skewed to polar residues.

The protein is GATA zinc finger domain-containing protein 10 (gtaJ) of Dictyostelium discoideum (Social amoeba).